A 351-amino-acid chain; its full sequence is Adenine deaminase (351 aa).

Zn(2+)-binding residues include H20, H22, and H200. E203 serves as the catalytic Proton donor. D281 lines the Zn(2+) pocket. D282 lines the substrate pocket.

Belongs to the metallo-dependent hydrolases superfamily. Adenosine and AMP deaminases family. Adenine deaminase type 2 subfamily. Zn(2+) serves as cofactor.

The enzyme catalyses adenine + H2O + H(+) = hypoxanthine + NH4(+). Its function is as follows. Catalyzes the hydrolytic deamination of adenine to hypoxanthine. Plays an important role in the purine salvage pathway and in nitrogen catabolism. This chain is Adenine deaminase, found in Cupriavidus necator (strain ATCC 17699 / DSM 428 / KCTC 22496 / NCIMB 10442 / H16 / Stanier 337) (Ralstonia eutropha).